The sequence spans 277 residues: Bis(5'-nucleosyl)-tetraphosphatase, symmetrical (277 aa).

The protein belongs to the Ap4A hydrolase family.

The enzyme catalyses P(1),P(4)-bis(5'-adenosyl) tetraphosphate + H2O = 2 ADP + 2 H(+). Its function is as follows. Hydrolyzes diadenosine 5',5'''-P1,P4-tetraphosphate to yield ADP. The sequence is that of Bis(5'-nucleosyl)-tetraphosphatase, symmetrical from Azotobacter vinelandii (strain DJ / ATCC BAA-1303).